A 401-amino-acid polypeptide reads, in one-letter code: Phosphoglycerate kinase (401 aa).

Residues D26–N28, R41, H64–K67, R125, and R158 each bind substrate. Residues K209, G300, E331, and G357–S360 contribute to the ATP site.

The protein belongs to the phosphoglycerate kinase family. As to quaternary structure, monomer.

It is found in the cytoplasm. It catalyses the reaction (2R)-3-phosphoglycerate + ATP = (2R)-3-phospho-glyceroyl phosphate + ADP. It participates in carbohydrate degradation; glycolysis; pyruvate from D-glyceraldehyde 3-phosphate: step 2/5. This is Phosphoglycerate kinase from Clostridium tetani (strain Massachusetts / E88).